A 185-amino-acid chain; its full sequence is MYSTTDFRKGLKIELDGTPFEIVDFQHFKPGKGGAMVRTKLRNILNGRVVDNTFRSGEKVGRPDLESRDMQYLYHEGDDLVLMDLTTYEQLYMHEDLTDGKAGFLKDGQQVRVLLYNGKPLDLELPVSLVLEVVETEPGAKGDTVSNVTKPAKLETGIVVQVPIFVNQGDRIKVDTRSREYLGRE.

This sequence belongs to the elongation factor P family.

The protein localises to the cytoplasm. Its pathway is protein biosynthesis; polypeptide chain elongation. In terms of biological role, involved in peptide bond synthesis. Stimulates efficient translation and peptide-bond synthesis on native or reconstituted 70S ribosomes in vitro. Probably functions indirectly by altering the affinity of the ribosome for aminoacyl-tRNA, thus increasing their reactivity as acceptors for peptidyl transferase. The polypeptide is Elongation factor P (Nitratidesulfovibrio vulgaris (strain DP4) (Desulfovibrio vulgaris)).